A 95-amino-acid chain; its full sequence is Aspartyl/glutamyl-tRNA(Asn/Gln) amidotransferase subunit C (95 aa).

The protein belongs to the GatC family. Heterotrimer of A, B and C subunits.

It catalyses the reaction L-glutamyl-tRNA(Gln) + L-glutamine + ATP + H2O = L-glutaminyl-tRNA(Gln) + L-glutamate + ADP + phosphate + H(+). The enzyme catalyses L-aspartyl-tRNA(Asn) + L-glutamine + ATP + H2O = L-asparaginyl-tRNA(Asn) + L-glutamate + ADP + phosphate + 2 H(+). Functionally, allows the formation of correctly charged Asn-tRNA(Asn) or Gln-tRNA(Gln) through the transamidation of misacylated Asp-tRNA(Asn) or Glu-tRNA(Gln) in organisms which lack either or both of asparaginyl-tRNA or glutaminyl-tRNA synthetases. The reaction takes place in the presence of glutamine and ATP through an activated phospho-Asp-tRNA(Asn) or phospho-Glu-tRNA(Gln). The polypeptide is Aspartyl/glutamyl-tRNA(Asn/Gln) amidotransferase subunit C (Hydrogenovibrio crunogenus (strain DSM 25203 / XCL-2) (Thiomicrospira crunogena)).